The following is a 230-amino-acid chain: Large ribosomal subunit protein uL1 (230 aa).

Belongs to the universal ribosomal protein uL1 family. As to quaternary structure, part of the 50S ribosomal subunit.

In terms of biological role, binds directly to 23S rRNA. The L1 stalk is quite mobile in the ribosome, and is involved in E site tRNA release. Functionally, protein L1 is also a translational repressor protein, it controls the translation of the L11 operon by binding to its mRNA. This is Large ribosomal subunit protein uL1 from Metamycoplasma arthritidis (strain 158L3-1) (Mycoplasma arthritidis).